The chain runs to 686 residues: Methionine--tRNA ligase (686 aa).

The short motif at 15 to 25 (PYANGSIHLGH) is the 'HIGH' region element. Residues cysteine 146, cysteine 149, cysteine 159, and cysteine 162 each contribute to the Zn(2+) site. The 'KMSKS' region motif lies at 332-336 (KMSKS). Lysine 335 is a binding site for ATP. Positions 550–571 (AAAEAAAKEKAEAEKEQASQTE) are disordered. Residues 585–686 (AFSAVDMRIA…EGAQPGMRVM (102 aa)) form the tRNA-binding domain.

The protein belongs to the class-I aminoacyl-tRNA synthetase family. MetG type 1 subfamily. Homodimer. Zn(2+) serves as cofactor.

The protein localises to the cytoplasm. The enzyme catalyses tRNA(Met) + L-methionine + ATP = L-methionyl-tRNA(Met) + AMP + diphosphate. Its function is as follows. Is required not only for elongation of protein synthesis but also for the initiation of all mRNA translation through initiator tRNA(fMet) aminoacylation. The protein is Methionine--tRNA ligase of Vibrio atlanticus (strain LGP32) (Vibrio splendidus (strain Mel32)).